A 269-amino-acid polypeptide reads, in one-letter code: NAD kinase (269 aa).

Asp-45 functions as the Proton acceptor in the catalytic mechanism. Residues 45-46 (DG), 122-123 (NE), Arg-149, Asp-151, and Ala-186 contribute to the NAD(+) site.

This sequence belongs to the NAD kinase family. The cofactor is a divalent metal cation.

Its subcellular location is the cytoplasm. It carries out the reaction NAD(+) + ATP = ADP + NADP(+) + H(+). Involved in the regulation of the intracellular balance of NAD and NADP, and is a key enzyme in the biosynthesis of NADP. Catalyzes specifically the phosphorylation on 2'-hydroxyl of the adenosine moiety of NAD to yield NADP. This Staphylococcus carnosus (strain TM300) protein is NAD kinase.